The chain runs to 401 residues: Cartilage-associated protein (401 aa).

The first 26 residues, 1–26, serve as a signal peptide directing secretion; the sequence is MEPGRRGAAALLALLCVACALRAGRA. 2 N-linked (GlcNAc...) asparagine glycosylation sites follow: N87 and N363.

The protein belongs to the leprecan family. In terms of tissue distribution, found in articular chondrocytes. Expressed in a variety of tissues.

The protein resides in the secreted. Its subcellular location is the extracellular space. The protein localises to the extracellular matrix. In terms of biological role, necessary for efficient 3-hydroxylation of fibrillar collagen prolyl residues. This Homo sapiens (Human) protein is Cartilage-associated protein (CRTAP).